The chain runs to 145 residues: Transcription antitermination protein NusB (145 aa).

Belongs to the NusB family.

Its function is as follows. Involved in transcription antitermination. Required for transcription of ribosomal RNA (rRNA) genes. Binds specifically to the boxA antiterminator sequence of the ribosomal RNA (rrn) operons. The chain is Transcription antitermination protein NusB from Burkholderia vietnamiensis (strain G4 / LMG 22486) (Burkholderia cepacia (strain R1808)).